The following is a 152-amino-acid chain: Anaerobic nitrite reductase HBI (152 aa).

The 150-residue stretch at 2–151 folds into the Globin domain; that stretch reads ALTEKQEALL…LVATIKAEMK (150 aa). A Homodimerization motif is present at residues 35-39; it reads EAAPE. Residues S45, K59, H63, R93, and H98 each contribute to the heme b site. A Homodimerization motif is present at residues 105 to 117; the sequence is DPHFEVMKGALLG.

Belongs to the plant globin family. As to quaternary structure, homodimer. The cofactor is heme b. Root nodules.

The protein localises to the cytoplasm. Its subcellular location is the nucleus. It carries out the reaction Fe(III)-heme b-[protein] + nitric oxide + H2O = Fe(II)-heme b-[protein] + nitrite + 2 H(+). Functionally, phytoglobin that reduces nitrite to nitric oxide (NO) under anoxic conditions (e.g. during flooding or in waterlogged soil) and upon root nodulation. Required for general plant development and during nodulation, especially for the onset of symbiosis. Monitors nitric oxide (NO) levels during early phase of the nitrogen-fixing symbiosis and buffers oxygen in functioning nodules. May not function as an oxygen storage or transport protein. Has an unusually high affinity for O(2) through a hexacoordinate heme iron because of a very low dissociation constant. This is Anaerobic nitrite reductase HBI from Casuarina glauca (Swamp oak).